The following is a 142-amino-acid chain: Hemoglobin subunit theta-1 (142 aa).

One can recognise a Globin domain in the interval A2–R142. Residues H59 and H88 each coordinate heme b.

It belongs to the globin family.

This Equus caballus (Horse) protein is Hemoglobin subunit theta-1 (HBQ1).